Reading from the N-terminus, the 226-residue chain is 7-cyano-7-deazaguanine synthase (226 aa).

10-20 (LSGGLDSATAA) serves as a coordination point for ATP. Zn(2+)-binding residues include C191, C199, C202, and C205.

It belongs to the QueC family. Zn(2+) serves as cofactor.

The catalysed reaction is 7-carboxy-7-deazaguanine + NH4(+) + ATP = 7-cyano-7-deazaguanine + ADP + phosphate + H2O + H(+). It functions in the pathway purine metabolism; 7-cyano-7-deazaguanine biosynthesis. Functionally, catalyzes the ATP-dependent conversion of 7-carboxy-7-deazaguanine (CDG) to 7-cyano-7-deazaguanine (preQ(0)). This is 7-cyano-7-deazaguanine synthase from Prochlorococcus marinus (strain MIT 9303).